A 417-amino-acid chain; its full sequence is Multifunctional CCA protein (417 aa).

ATP contacts are provided by Gly-8 and Arg-11. Positions 8 and 11 each coordinate CTP. Positions 21 and 23 each coordinate Mg(2+). Residues Arg-91, Arg-137, and Arg-140 each contribute to the ATP site. CTP is bound by residues Arg-91, Arg-137, and Arg-140. The 102-residue stretch at 225 to 326 folds into the HD domain; it reads SGIHTLMTLQ…LNVLKKTDAF (102 aa).

The protein belongs to the tRNA nucleotidyltransferase/poly(A) polymerase family. Bacterial CCA-adding enzyme type 1 subfamily. In terms of assembly, monomer. Can also form homodimers and oligomers. It depends on Mg(2+) as a cofactor. Ni(2+) is required as a cofactor.

The enzyme catalyses a tRNA precursor + 2 CTP + ATP = a tRNA with a 3' CCA end + 3 diphosphate. The catalysed reaction is a tRNA with a 3' CCA end + 2 CTP + ATP = a tRNA with a 3' CCACCA end + 3 diphosphate. Its function is as follows. Catalyzes the addition and repair of the essential 3'-terminal CCA sequence in tRNAs without using a nucleic acid template. Adds these three nucleotides in the order of C, C, and A to the tRNA nucleotide-73, using CTP and ATP as substrates and producing inorganic pyrophosphate. tRNA 3'-terminal CCA addition is required both for tRNA processing and repair. Also involved in tRNA surveillance by mediating tandem CCA addition to generate a CCACCA at the 3' terminus of unstable tRNAs. While stable tRNAs receive only 3'-terminal CCA, unstable tRNAs are marked with CCACCA and rapidly degraded. The sequence is that of Multifunctional CCA protein from Neisseria meningitidis serogroup A / serotype 4A (strain DSM 15465 / Z2491).